The sequence spans 393 residues: Ferrochelatase, mitochondrial (393 aa).

The transit peptide at 1–31 (MLSRTIRTQGSFLRRSQLTITRSFSVTFNMQ) directs the protein to the mitochondrion. Asp351 is an active-site residue.

Belongs to the ferrochelatase family. In terms of processing, the leader peptide may be processed in two proteolytic steps, first between Ser-23 and Phe-24, second and by a different protease, to yield the mature protein.

It is found in the mitochondrion inner membrane. It catalyses the reaction heme b + 2 H(+) = protoporphyrin IX + Fe(2+). The protein operates within porphyrin-containing compound metabolism; protoheme biosynthesis; protoheme from protoporphyrin-IX: step 1/1. In terms of biological role, catalyzes the ferrous insertion into protoporphyrin IX. In Saccharomyces cerevisiae (strain ATCC 204508 / S288c) (Baker's yeast), this protein is Ferrochelatase, mitochondrial (HEM15).